Consider the following 146-residue polypeptide: Sordarin/hypoxysordarin biosynthesis cluster protein G (146 aa).

The protein operates within antibiotic biosynthesis. Functionally, part of the gene cluster that mediates the biosynthesis of sordarin and hypoxysordarin, glycoside antibiotics with a unique tetracyclic diterpene aglycone structure. First, the geranylgeranyl diphosphate synthase sdnC constructs GGDP from farnesyl diphosphate and isopentenyl diphosphate. The diterpene cyclase sdnA then catalyzes the cyclization of GGDP to afford cycloaraneosene. Cycloaraneosene is then hydroxylated four times by the putative cytochrome P450 monooxygenases sdnB, sdnE, sdnF and sdnH to give a hydroxylated cycloaraneosene derivative such as cycloaraneosene-8,9,13,19-tetraol. Although the order of the hydroxylations is unclear, at least C8, C9 and C13 of the cycloaraneosene skeleton are hydroxylated before the sordaricin formation. Dehydration of the 13-hydroxy group of the hydroxylated cycloaraneosene derivative might be catalyzed by an unassigned hypothetical protein such as sdnG and sdnP to construct the cyclopentadiene moiety. The FAD-dependent oxidoreductase sdnN is proposed to catalyze the oxidation at C9 of the hydroxylated cycloaraneosene derivative and also catalyze the Baeyer-Villiger oxidation to give the lactone intermediate. The presumed lactone intermediate would be hydrolyzed to give an acrolein moiety and a carboxylate moiety. Then, [4+2]cycloaddition would occur between the acrolein moiety and the cyclopentadiene moiety to give sordaricin. SdnN might also be involved in the [4+2]cycloaddition after the hypothesized oxidation to accommodate the oxidized product and prompt the [4+2]cycloaddition. GDP-6-deoxy-D-altrose may be biosynthesized from GDP-D-mannose by the putative GDP-mannose-4,6-dehydratase sdnI and the short-chain dehydrogenase sdnK. The glycosyltransferase sdnJ catalyzes the attachment of 6-deoxy-D-altrose onto the 19-hydroxy group of sordaricin to give 4'-O-demethylsordarin. The methyltransferase sdnD would complete the biosynthesis of sordarin. Sordarin can be further modified into hypoxysordarin. The unique acyl chain at the 3'-hydroxy group of hypoxysordarin would be constructed by an iterative type I PKS sdnO and the trans-acting polyketide methyltransferase sdnL. SdnL would be responsible for the introduction of an alpha-methyl group of the polyketide chain. Alternatively, the beta-lactamase-like protein sdnR might be responsible for the cleavage and transfer of the polyketide chain from the PKS sdnO to sordarin. Two putative cytochrome P450 monooxygenases, sdnQ and sdnT, might catalyze the epoxidations of the polyketide chain to complete the biosynthesis of hypoxysordarin. Transcriptional regulators sdnM and sdnS are presumably encoded for the transcriptional regulation of the expression of the sdn gene cluster. The chain is Sordarin/hypoxysordarin biosynthesis cluster protein G from Sordaria araneosa (Pleurage araneosa).